The sequence spans 151 residues: Ribosome maturation factor RimP (151 aa).

This sequence belongs to the RimP family.

Its subcellular location is the cytoplasm. Functionally, required for maturation of 30S ribosomal subunits. This Halorhodospira halophila (strain DSM 244 / SL1) (Ectothiorhodospira halophila (strain DSM 244 / SL1)) protein is Ribosome maturation factor RimP.